A 192-amino-acid chain; its full sequence is Elongation factor P (192 aa).

Lys37 is subject to N6-(3,6-diaminohexanoyl)-5-hydroxylysine.

Belongs to the elongation factor P family. Post-translationally, may be beta-lysylated on the epsilon-amino group of Lys-37 by the combined action of EpmA and EpmB, and then hydroxylated on the C5 position of the same residue by EpmC (if this protein is present). Lysylation is critical for the stimulatory effect of EF-P on peptide-bond formation. The lysylation moiety may extend toward the peptidyltransferase center and stabilize the terminal 3-CCA end of the tRNA. Hydroxylation of the C5 position on Lys-37 may allow additional potential stabilizing hydrogen-bond interactions with the P-tRNA.

It localises to the cytoplasm. It participates in protein biosynthesis; polypeptide chain elongation. Functionally, involved in peptide bond synthesis. Alleviates ribosome stalling that occurs when 3 or more consecutive Pro residues or the sequence PPG is present in a protein, possibly by augmenting the peptidyl transferase activity of the ribosome. Modification of Lys-37 is required for alleviation. The chain is Elongation factor P from Acinetobacter baylyi (strain ATCC 33305 / BD413 / ADP1).